Here is a 340-residue protein sequence, read N- to C-terminus: MLTNRQIKILQTIVEEFIKTNQPVGSKRILELLNMKISSATIRNESATLEHEGYLEKQHTSSGRTPSTKGYRYYVDNIMKLDSADYTRLKIYLNQLLDLRKYDIDKTINYASEIISELTKMTAVVIKKQNIKDIKLKKIELILLSEFLASVLFIFSDGDVQNKMFNLKDVALSDLKIAIKLFSDVLVDVKLDEIDQYLNDLKHQLFLSIKQYDYVLNTFINTILESKNEQKETHGMRYMLENPEFNDTNKLKNAVKLVEQLSPFDWFNIAYESNKNMNKIAIKIGNEIDQINDDISMIATELKIGNSSTVLTLVGPKRVDYNQVNQLMNLIIEIINTKEN.

Belongs to the HrcA family.

Negative regulator of class I heat shock genes (grpE-dnaK-dnaJ and groELS operons). Prevents heat-shock induction of these operons. The polypeptide is Heat-inducible transcription repressor HrcA (Mycoplasma mycoides subsp. mycoides SC (strain CCUG 32753 / NCTC 10114 / PG1)).